A 444-amino-acid polypeptide reads, in one-letter code: Alpha-N-acetylgalactosaminidase (444 aa).

Residues 30 to 31 (LR), D52, N80, 101 to 104 (WEWH), H107, 121 to 122 (EV), and N150 each bind NAD(+). Residue Y179 coordinates substrate. NAD(+) is bound at residue 208 to 212 (SEAKW). Substrate contacts are provided by residues R213, 225–228 (YPTH), and Y307. Y225 serves as a coordination point for NAD(+).

This sequence belongs to the Gfo/Idh/MocA family. Glycosyl hydrolase 109 subfamily. NAD(+) serves as cofactor.

It catalyses the reaction Cleavage of non-reducing alpha-(1-&gt;3)-N-acetylgalactosamine residues from human blood group A and AB mucin glycoproteins, Forssman hapten and blood group A lacto series glycolipids.. Glycosidase that has specific alpha-N-acetylgalactosaminidase activity. This chain is Alpha-N-acetylgalactosaminidase (nagA), found in Elizabethkingia meningoseptica (Chryseobacterium meningosepticum).